We begin with the raw amino-acid sequence, 219 residues long: Large ribosomal subunit protein uL4 (219 aa).

The tract at residues 43–100 is disordered; that stretch reads AAKRQGTHSTKTRGEVSGGGKKPYRQKGTGRARQGSTRAPQFTGGGTVHGPQPRDYSQ.

This sequence belongs to the universal ribosomal protein uL4 family. As to quaternary structure, part of the 50S ribosomal subunit.

In terms of biological role, one of the primary rRNA binding proteins, this protein initially binds near the 5'-end of the 23S rRNA. It is important during the early stages of 50S assembly. It makes multiple contacts with different domains of the 23S rRNA in the assembled 50S subunit and ribosome. Functionally, forms part of the polypeptide exit tunnel. This chain is Large ribosomal subunit protein uL4, found in Mycobacterium sp. (strain JLS).